Here is a 482-residue protein sequence, read N- to C-terminus: Ubiquitin carboxyl-terminal hydrolase MINDY-1 (482 aa).

Positions 1–119 (MEQPQAECPA…RPQQLPQSPR (119 aa)) are disordered. Residues 21–66 (ESEKHEALSGPEKHPQDKDGADAAPEKHPQDKDGADAHGEAGKQKS) show a composition bias toward basic and acidic residues. The span at 82-94 (CPPPEASSSPPGP) shows a compositional bias: pro residues. Over residues 106 to 119 (EACSRPQQLPQSPR) the composition is skewed to polar residues. Residue S117 is modified to Phosphoserine. C151 acts as the Nucleophile in catalysis. Catalysis depends on H333, which acts as the Proton acceptor. The interval 402-441 (QVDQDYLIALSLQQQQQPQGMLGLSDLELAQQLQQEEYQQ) is ubiquitin-binding domain (UBD). Over residues 437–446 (EEYQQQQAVQ) the composition is skewed to low complexity. The tract at residues 437-482 (EEYQQQQAVQPVRTRAPSSPGRGATSGRPAGERRQRSKTESDCVLL) is disordered. S454 bears the Phosphoserine mark. Over residues 466-482 (AGERRQRSKTESDCVLL) the composition is skewed to basic and acidic residues.

It belongs to the MINDY deubiquitinase family. FAM63 subfamily.

It catalyses the reaction Thiol-dependent hydrolysis of ester, thioester, amide, peptide and isopeptide bonds formed by the C-terminal Gly of ubiquitin (a 76-residue protein attached to proteins as an intracellular targeting signal).. In terms of biological role, hydrolase that can specifically remove 'Lys-48'-linked conjugated ubiquitin from proteins. Has exodeubiquitinase activity and has a preference for long polyubiquitin chains. May play a regulatory role at the level of protein turnover. This Rattus norvegicus (Rat) protein is Ubiquitin carboxyl-terminal hydrolase MINDY-1 (Mindy1).